The primary structure comprises 821 residues: Palmitoyltransferase AKR1 (821 aa).

Positions 1-118 are disordered; that stretch reads MVDKDANNEL…KDTASRKSMD (118 aa). Over 1-400 the chain is Cytoplasmic; the sequence is MVDKDANNEL…TIYLNPKIGK (400 aa). A compositionally biased stretch (basic and acidic residues) spans 93–117; that stretch reads IQDESVNDKTSEPDENKDTASRKSM. 6 ANK repeats span residues 142–172, 176–205, 213–243, 247–277, 289–318, and 322–351; these read PSLH…KAND, DGIT…SKAD, LKAS…DPTL, QSYN…STST, CDRT…DVSK, and NLFI…NIFA. A helical transmembrane segment spans residues 401-421; it reads LVTFFTPYIILPIMFQVCSFY. Asparagine 422 is a topological domain (lumenal). The chain crosses the membrane as a helical span at residues 423–443; it reads GFVIPKLFFSVVLFAGSIYIL. At 444 to 463 the chain is on the cytoplasmic side; that stretch reads QKLVIPTYLAEEKAIPKSPL. Residues 464 to 484 traverse the membrane as a helical segment; the sequence is LAGIFSGTAFWCIVTWAFNII. Over 485-494 the chain is Lumenal; sequence PTLLFKKFIS. Residues 495-515 form a helical membrane-spanning segment; that stretch reads NLVLSAFIYLFVWSFFKAMFI. Topologically, residues 516 to 589 are cytoplasmic; sequence NPGYVPVPSD…YNDIGVRNHK (74 aa). Residues 546-596 enclose the DHHC domain; the sequence is NFCVNTFVRKPLRSKYSRFNKKLIARFDHYCPWVYNDIGVRNHKLFVVFVY. The S-palmitoyl cysteine intermediate role is filled by cysteine 576. Residues 590–610 form a helical membrane-spanning segment; it reads LFVVFVYSLNLAVLLFTHLSI. At 611–650 the chain is on the lumenal side; sequence KLFKNTEKMSGYDSDDESQKCWLLSDELCVGYKSHHFQFN. A helical membrane pass occupies residues 651–671; the sequence is LMLWCLIQYIWIAFLCLVQTF. At 672 to 821 the chain is on the cytoplasmic side; sequence QILKGLTTWE…YPPKLADVDA (150 aa).

The protein belongs to the DHHC palmitoyltransferase family. AKR/ZDHHC17 subfamily.

It localises to the early endosome membrane. It is found in the golgi apparatus membrane. It catalyses the reaction L-cysteinyl-[protein] + hexadecanoyl-CoA = S-hexadecanoyl-L-cysteinyl-[protein] + CoA. Its function is as follows. Palmitoyltransferase specific for casein kinase 1. This chain is Palmitoyltransferase AKR1 (AKR1), found in Debaryomyces hansenii (strain ATCC 36239 / CBS 767 / BCRC 21394 / JCM 1990 / NBRC 0083 / IGC 2968) (Yeast).